The following is a 179-amino-acid chain: ATP synthase subunit delta (179 aa).

It belongs to the ATPase delta chain family. F-type ATPases have 2 components, F(1) - the catalytic core - and F(0) - the membrane proton channel. F(1) has five subunits: alpha(3), beta(3), gamma(1), delta(1), epsilon(1). F(0) has three main subunits: a(1), b(2) and c(10-14). The alpha and beta chains form an alternating ring which encloses part of the gamma chain. F(1) is attached to F(0) by a central stalk formed by the gamma and epsilon chains, while a peripheral stalk is formed by the delta and b chains.

It localises to the cell membrane. Its function is as follows. F(1)F(0) ATP synthase produces ATP from ADP in the presence of a proton or sodium gradient. F-type ATPases consist of two structural domains, F(1) containing the extramembraneous catalytic core and F(0) containing the membrane proton channel, linked together by a central stalk and a peripheral stalk. During catalysis, ATP synthesis in the catalytic domain of F(1) is coupled via a rotary mechanism of the central stalk subunits to proton translocation. This protein is part of the stalk that links CF(0) to CF(1). It either transmits conformational changes from CF(0) to CF(1) or is implicated in proton conduction. The sequence is that of ATP synthase subunit delta from Ureaplasma urealyticum serovar 10 (strain ATCC 33699 / Western).